Reading from the N-terminus, the 537-residue chain is Chaperonin GroEL (537 aa).

ATP contacts are provided by residues 29 to 32 (TLGP), 86 to 90 (DGTTT), glycine 413, and aspartate 492.

Belongs to the chaperonin (HSP60) family. In terms of assembly, forms a cylinder of 14 subunits composed of two heptameric rings stacked back-to-back. Interacts with the co-chaperonin GroES.

The protein resides in the cytoplasm. The enzyme catalyses ATP + H2O + a folded polypeptide = ADP + phosphate + an unfolded polypeptide.. Its function is as follows. Together with its co-chaperonin GroES, plays an essential role in assisting protein folding. The GroEL-GroES system forms a nano-cage that allows encapsulation of the non-native substrate proteins and provides a physical environment optimized to promote and accelerate protein folding. This is Chaperonin GroEL from Dehalococcoides mccartyi (strain CBDB1).